Here is a 218-residue protein sequence, read N- to C-terminus: Thiopurine S-methyltransferase (218 aa).

Trp10, Leu45, Glu66, and Arg123 together coordinate S-adenosyl-L-methionine.

It belongs to the class I-like SAM-binding methyltransferase superfamily. TPMT family.

It is found in the cytoplasm. It carries out the reaction S-adenosyl-L-methionine + a thiopurine = S-adenosyl-L-homocysteine + a thiopurine S-methylether.. This is Thiopurine S-methyltransferase from Pseudomonas fluorescens (strain SBW25).